We begin with the raw amino-acid sequence, 210 residues long: NDR1/HIN1-like protein 12 (210 aa).

Residues Gly23–Leu43 traverse the membrane as a helical segment. Residue Asn61 is glycosylated (N-linked (GlcNAc...) asparagine).

May form oligomers or be a component of larger protein complex in plasma membranes. In terms of tissue distribution, expressed in leaves, stems and flowers, and, to a lower extent, in siliques and roots.

The protein resides in the cell membrane. May play a role in plant immunity. In Arabidopsis thaliana (Mouse-ear cress), this protein is NDR1/HIN1-like protein 12.